The following is a 212-amino-acid chain: 3-isopropylmalate dehydratase small subunit (212 aa).

The protein belongs to the LeuD family. LeuD type 1 subfamily. As to quaternary structure, heterodimer of LeuC and LeuD.

It carries out the reaction (2R,3S)-3-isopropylmalate = (2S)-2-isopropylmalate. It participates in amino-acid biosynthesis; L-leucine biosynthesis; L-leucine from 3-methyl-2-oxobutanoate: step 2/4. Its function is as follows. Catalyzes the isomerization between 2-isopropylmalate and 3-isopropylmalate, via the formation of 2-isopropylmaleate. The chain is 3-isopropylmalate dehydratase small subunit from Thioalkalivibrio sulfidiphilus (strain HL-EbGR7).